The primary structure comprises 300 residues: Rhodopsin (300 aa).

The Extracellular segment spans residues 1–18 (LHMIHLHWYQYPPMNPMM). A helical transmembrane segment spans residues 19–43 (YPLLLVFMLITGILCLAGNFVTIWV). Residues 44-55 (FMNTKSLRTPAN) lie on the Cytoplasmic side of the membrane. A helical transmembrane segment spans residues 56 to 78 (LLVVNLAMSDFLMMFTMFPPMMV). The Extracellular segment spans residues 79–92 (TCYYHTWTLGATFC). Cys-92 and Cys-168 are joined by a disulfide. Residues 93 to 115 (QVYAFLGNLCGCASIWTMVFITF) traverse the membrane as a helical segment. Residues 116–118 (DRY) carry the 'Ionic lock' involved in activated form stabilization motif. Residues 116-134 (DRYNVIVKGVAGEPLSTKK) are Cytoplasmic-facing. Residues 135 to 155 (ASLWILTIWILSITWCIAPFF) traverse the membrane as a helical segment. At 156 to 181 (GWNRYVPEGNTGCGTDYLSEDILSRS) the chain is on the extracellular side. The chain crosses the membrane as a helical span at residues 182 to 203 (YLYIYSTWVYFLPLAITIYCHV). At 204-244 (FIIKAVAAHEKGMRDQAKKMGIKSLRNEEAQKTSAECRLAK) the chain is on the cytoplasmic side. A helical membrane pass occupies residues 245 to 266 (IAMTTVALWFIAWTPYLLINWV). Topologically, residues 267–277 (GMFARSYLSPV) are extracellular. A helical membrane pass occupies residues 278 to 299 (YTIWGYVFAKANAVYNPIVYAI). Lys-287 carries the N6-(retinylidene)lysine modification.

It belongs to the G-protein coupled receptor 1 family. Opsin subfamily. As to quaternary structure, homodimer. Interacts with GNAQ. Post-translationally, contains one covalently linked retinal chromophore.

It is found in the cell projection. The protein resides in the rhabdomere membrane. Its function is as follows. Photoreceptor required for image-forming vision at low light intensity. Can use both retinal and 3-dehydroretinal as visual pigment. Light-induced isomerization of 11-cis to all-trans retinal triggers a conformational change that activates signaling via G-proteins. Signaling via GNAQ probably mediates the activation of phospholipase C. The protein is Rhodopsin (RHO) of Cambarus maculatus (Freckled crayfish).